Reading from the N-terminus, the 582-residue chain is Protein NUCLEAR FUSION DEFECTIVE 4 (582 aa).

Residues 1 to 20 (MRPRIRDVSDKLRPNRASFD) form a disordered region. Transmembrane regions (helical) follow at residues 46–66 (VLVA…FSAY), 100–120 (IALG…MGFV), 132–152 (IITL…LSIC), 172–192 (LALS…SLAF), 202–222 (LYLL…LYPV), 243–263 (VFTI…LSSS), 270–290 (LNFI…LLVY), and 358–378 (LEFW…LVYS). N-linked (GlcNAc...) asparagine glycosylation occurs at Asn391. The next 5 helical transmembrane spans lie at 395–412 (LVTI…LSAA), 425–445 (TGWF…LAVS), 458–478 (LIGL…SDLF), 489–509 (ILIT…ASIY), and 536–556 (TFVF…SLYI).

Its subcellular location is the membrane. Its function is as follows. Required for karyogamy during female gametophyte development, when the two polar nuclei fuse to form the diploid central cell nucleus. In Arabidopsis thaliana (Mouse-ear cress), this protein is Protein NUCLEAR FUSION DEFECTIVE 4.